A 130-amino-acid chain; its full sequence is Iron-sulfur cluster insertion protein ErpA 2 (130 aa).

Residues C58, C122, and C124 each contribute to the iron-sulfur cluster site.

Belongs to the HesB/IscA family. As to quaternary structure, homodimer. Iron-sulfur cluster is required as a cofactor.

Functionally, required for insertion of 4Fe-4S clusters for at least IspG. The protein is Iron-sulfur cluster insertion protein ErpA 2 of Methylococcus capsulatus (strain ATCC 33009 / NCIMB 11132 / Bath).